We begin with the raw amino-acid sequence, 89 residues long: Small ribosomal subunit protein uS15 (89 aa).

The protein belongs to the universal ribosomal protein uS15 family. As to quaternary structure, part of the 30S ribosomal subunit. Forms a bridge to the 50S subunit in the 70S ribosome, contacting the 23S rRNA.

Functionally, one of the primary rRNA binding proteins, it binds directly to 16S rRNA where it helps nucleate assembly of the platform of the 30S subunit by binding and bridging several RNA helices of the 16S rRNA. Its function is as follows. Forms an intersubunit bridge (bridge B4) with the 23S rRNA of the 50S subunit in the ribosome. This Xanthobacter autotrophicus (strain ATCC BAA-1158 / Py2) protein is Small ribosomal subunit protein uS15.